We begin with the raw amino-acid sequence, 362 residues long: UPF0324 membrane protein YPO1307/y2878/YP_1285 (362 aa).

The next 9 helical transmembrane spans lie at 21–38 (YIPG…ALNV), 48–70 (GLGA…YPWL), 102–124 (VADV…FILA), 139–161 (VMLI…EPVL), 168–190 (VAVA…PWLY), 240–257 (MIRV…SAYL), 278–300 (WFAV…AVWV), 305–327 (TLDT…IGSI), and 334–356 (PLLL…NLFV).

It belongs to the UPF0324 family.

The protein localises to the cell membrane. The chain is UPF0324 membrane protein YPO1307/y2878/YP_1285 from Yersinia pestis.